Here is a 38-residue protein sequence, read N- to C-terminus: Phi-Lf prophage-derived putative minor coat protein (38 aa).

This chain is Phi-Lf prophage-derived putative minor coat protein (gIX-1), found in Xanthomonas campestris pv. campestris (strain ATCC 33913 / DSM 3586 / NCPPB 528 / LMG 568 / P 25).